The primary structure comprises 341 residues: 4-hydroxythreonine-4-phosphate dehydrogenase (341 aa).

Thr-126 is a substrate binding site. Residues His-161, His-206, and His-272 each contribute to the a divalent metal cation site. The substrate site is built by Lys-280, Asn-289, and Arg-298.

This sequence belongs to the PdxA family. As to quaternary structure, homodimer. A divalent metal cation is required as a cofactor.

The protein resides in the cytoplasm. The catalysed reaction is 4-(phosphooxy)-L-threonine + NAD(+) = 3-amino-2-oxopropyl phosphate + CO2 + NADH. The protein operates within cofactor biosynthesis; pyridoxine 5'-phosphate biosynthesis; pyridoxine 5'-phosphate from D-erythrose 4-phosphate: step 4/5. Functionally, catalyzes the NAD(P)-dependent oxidation of 4-(phosphooxy)-L-threonine (HTP) into 2-amino-3-oxo-4-(phosphooxy)butyric acid which spontaneously decarboxylates to form 3-amino-2-oxopropyl phosphate (AHAP). The sequence is that of 4-hydroxythreonine-4-phosphate dehydrogenase from Thermosynechococcus vestitus (strain NIES-2133 / IAM M-273 / BP-1).